Reading from the N-terminus, the 63-residue chain is MNSAFVLVLTVFLVSGEPVDIAVSVHRTMQECMTAATEQKIPGNCYPVDKVIHQDNIEIPAGL.

This is an uncharacterized protein from Escherichia coli (strain K12).